We begin with the raw amino-acid sequence, 238 residues long: Metal-independent phosphoserine phosphatase (238 aa).

His32 functions as the Tele-phosphohistidine intermediate in the catalytic mechanism. Glu107 functions as the Proton donor/acceptor in the catalytic mechanism.

Belongs to the phosphoglycerate mutase family.

The enzyme catalyses O-phospho-L-serine + H2O = L-serine + phosphate. It carries out the reaction O-phospho-D-serine + H2O = D-serine + phosphate. Its function is as follows. Phosphoglycerate mutase-like protein lacking PGM activity, but having a low metal-independent phosphoserine phosphatase activity in vitro. May be involved in serine biosynthesis. In Arabidopsis thaliana (Mouse-ear cress), this protein is Metal-independent phosphoserine phosphatase (IPSP).